The primary structure comprises 190 residues: Threonylcarbamoyl-AMP synthase (190 aa).

One can recognise a YrdC-like domain in the interval 7–190 (GDAIAAAIDV…ALTGELFRQG (184 aa)).

The protein belongs to the SUA5 family. TsaC subfamily.

The protein localises to the cytoplasm. It carries out the reaction L-threonine + hydrogencarbonate + ATP = L-threonylcarbamoyladenylate + diphosphate + H2O. Required for the formation of a threonylcarbamoyl group on adenosine at position 37 (t(6)A37) in tRNAs that read codons beginning with adenine. Catalyzes the conversion of L-threonine, HCO(3)(-)/CO(2) and ATP to give threonylcarbamoyl-AMP (TC-AMP) as the acyladenylate intermediate, with the release of diphosphate. The chain is Threonylcarbamoyl-AMP synthase from Shigella dysenteriae serotype 1 (strain Sd197).